Here is a 326-residue protein sequence, read N- to C-terminus: Biotin synthase (326 aa).

The Radical SAM core domain maps to 50–279 (FNGEKVDVEQ…ESVIKISGGR (230 aa)). C68, C72, and C75 together coordinate [4Fe-4S] cluster. 4 residues coordinate [2Fe-2S] cluster: C112, C145, C204, and K274.

The protein belongs to the radical SAM superfamily. Biotin synthase family. Homodimer. [4Fe-4S] cluster serves as cofactor. It depends on [2Fe-2S] cluster as a cofactor.

It carries out the reaction (4R,5S)-dethiobiotin + (sulfur carrier)-SH + 2 reduced [2Fe-2S]-[ferredoxin] + 2 S-adenosyl-L-methionine = (sulfur carrier)-H + biotin + 2 5'-deoxyadenosine + 2 L-methionine + 2 oxidized [2Fe-2S]-[ferredoxin]. Its pathway is cofactor biosynthesis; biotin biosynthesis; biotin from 7,8-diaminononanoate: step 2/2. Functionally, catalyzes the conversion of dethiobiotin (DTB) to biotin by the insertion of a sulfur atom into dethiobiotin via a radical-based mechanism. The sequence is that of Biotin synthase from Nitrosopumilus maritimus (strain SCM1).